Here is an 849-residue protein sequence, read N- to C-terminus: DNA mismatch repair protein MutS (849 aa).

ATP is bound at residue 602 to 609 (GPNMSGKS).

It belongs to the DNA mismatch repair MutS family.

This protein is involved in the repair of mismatches in DNA. It is possible that it carries out the mismatch recognition step. This protein has a weak ATPase activity. This is DNA mismatch repair protein MutS from Streptococcus sanguinis (strain SK36).